Consider the following 232-residue polypeptide: Small ribosomal subunit protein uS3 (232 aa).

A KH type-2 domain is found at 39–107; it reads IRKFLKTKLY…DIAINIKEER (69 aa). Basic and acidic residues predominate over residues 213–222; that stretch reads QADKNEDTSP. The interval 213–232 is disordered; that stretch reads QADKNEDTSPKKPRRARRGK. Residues 223–232 are compositionally biased toward basic residues; the sequence is KKPRRARRGK.

It belongs to the universal ribosomal protein uS3 family. As to quaternary structure, part of the 30S ribosomal subunit. Forms a tight complex with proteins S10 and S14.

Its function is as follows. Binds the lower part of the 30S subunit head. Binds mRNA in the 70S ribosome, positioning it for translation. The chain is Small ribosomal subunit protein uS3 from Campylobacter fetus subsp. fetus (strain 82-40).